A 506-amino-acid chain; its full sequence is Cytochrome P450 monooxygenase BOA3 (506 aa).

The chain crosses the membrane as a helical span at residues 15-35 (IYLWIGFVLVVLLAYPTYFAI). Cys451 contributes to the heme binding site.

This sequence belongs to the cytochrome P450 family. It depends on heme as a cofactor.

It localises to the membrane. Its pathway is polyketide biosynthesis. In terms of biological role, cytochrome P450 monooxygenase; part of the gene cluster A that mediates the biosynthesis of botcinic acid and its botcinin derivatives, acetate-derived polyketides that contribute to virulence when combined with the sesquiterpene botrydial. Botcinic acid and its derivatives have been shown to induce chlorosis and necrosis during host plant infection, but also have antifungal activities. Two polyketide synthases, BOA6 and BOA9, are involved in the biosynthesis of botcinins. BOA6 mediates the formation of the per-methylated tetraketide core by condensation of four units of malonyl-CoA with one unit of acetyl-CoA, which would be methylated in activated methylene groups to yield a bicyclic acid intermediate that could then either be converted to botrylactone derivatives or lose the starter acetate unit through a retro-Claisen type C-C bond cleavage to yield botcinin derivatives. The second polyketide synthase, BOA9, is probably required for the biosynthesis of the tetraketide side chain of botcinins. The methyltransferase (MT) domain within BOA6 is probably responsible for the incorporation of four methyl groups. The trans-enoyl reductase BOA5 might take over the enoyl reductase function of BOA6 that misses an ER domain. The monooxygenases BOA2, BOA3 and BOA4 might be involved in further hydroxylations at C4, C5 and C8, whereas BOA7, close to BOA9, could potentially be involved in the hydroxylation at C4 in the side chain of botcinins. The sequence is that of Cytochrome P450 monooxygenase BOA3 from Botryotinia fuckeliana (strain B05.10) (Noble rot fungus).